The sequence spans 215 residues: Mite allergen Der p 7 (215 aa).

The N-terminal stretch at 1 to 17 is a signal peptide; the sequence is MMKLLLIAAAAFVAVSA. N-linked (GlcNAc...) asparagine glycosylation is present at N151.

Belongs to the mite group 7 allergen family.

It localises to the secreted. The polypeptide is Mite allergen Der p 7 (DERP7) (Dermatophagoides pteronyssinus (European house dust mite)).